Reading from the N-terminus, the 593-residue chain is Serine/threonine-protein kinase SSN3 (593 aa).

The region spanning 90–489 (YEIIGYIAAG…AIDALDHVYF (400 aa)) is the Protein kinase domain. 96-104 (IAAGTYGKV) contacts ATP. A disordered region spans residues 161 to 199 (KPSHKRFTPPNNSNSTQIRSNSGSETNVRINSSSITNNS). The segment covering 169-185 (PPNNSNSTQIRSNSGSE) has biased composition (polar residues). Residues 186–199 (TNVRINSSSITNNS) are compositionally biased toward low complexity. Lys211 serves as a coordination point for ATP. Asp312 (proton acceptor) is an active-site residue. Disordered stretches follow at residues 517–551 (DNDI…NMNG) and 569–593 (AAVS…KKRK). Polar residues predominate over residues 518 to 536 (NDITNVGNDNNQANHSQKQ). The span at 540-551 (GNNNNKNGNMNG) shows a compositional bias: low complexity. Over residues 573–585 (GNGNNPTSNTATG) the composition is skewed to polar residues.

This sequence belongs to the protein kinase superfamily. CMGC Ser/Thr protein kinase family. CDC2/CDKX subfamily. In terms of assembly, component of the SRB8-11 complex, a regulatory module of the Mediator complex. Mg(2+) is required as a cofactor.

Its subcellular location is the nucleus. It catalyses the reaction L-seryl-[protein] + ATP = O-phospho-L-seryl-[protein] + ADP + H(+). The catalysed reaction is L-threonyl-[protein] + ATP = O-phospho-L-threonyl-[protein] + ADP + H(+). It carries out the reaction [DNA-directed RNA polymerase] + ATP = phospho-[DNA-directed RNA polymerase] + ADP + H(+). In terms of biological role, component of the SRB8-11 complex. The SRB8-11 complex is a regulatory module of the Mediator complex which is itself involved in regulation of basal and activated RNA polymerase II-dependent transcription. The SRB8-11 complex may be involved in the transcriptional repression of a subset of genes regulated by Mediator. It may inhibit the association of the Mediator complex with RNA polymerase II to form the holoenzyme complex. The SRB8-11 complex phosphorylates the C-terminal domain (CTD) of the largest subunit of RNA polymerase II. The sequence is that of Serine/threonine-protein kinase SSN3 (SSN3) from Kluyveromyces lactis (strain ATCC 8585 / CBS 2359 / DSM 70799 / NBRC 1267 / NRRL Y-1140 / WM37) (Yeast).